The primary structure comprises 316 residues: Methionyl-tRNA formyltransferase (316 aa).

111 to 114 is a (6S)-5,6,7,8-tetrahydrofolate binding site; that stretch reads GLLP.

The protein belongs to the Fmt family.

It catalyses the reaction L-methionyl-tRNA(fMet) + (6R)-10-formyltetrahydrofolate = N-formyl-L-methionyl-tRNA(fMet) + (6S)-5,6,7,8-tetrahydrofolate + H(+). Functionally, attaches a formyl group to the free amino group of methionyl-tRNA(fMet). The formyl group appears to play a dual role in the initiator identity of N-formylmethionyl-tRNA by promoting its recognition by IF2 and preventing the misappropriation of this tRNA by the elongation apparatus. The sequence is that of Methionyl-tRNA formyltransferase from Chlamydia trachomatis serovar A (strain ATCC VR-571B / DSM 19440 / HAR-13).